An 87-amino-acid polypeptide reads, in one-letter code: Sec-independent protein translocase protein TatA (87 aa).

A helical membrane pass occupies residues 1–21 (MGGMSITHWIVVAVVVMIFFG). Residues 40–87 (KKGMSEDDTTPPAAPPAPAPRLENQPLPPENTTQNVAQNVPNDIKNNQ) are disordered. Polar residues predominate over residues 69–87 (ENTTQNVAQNVPNDIKNNQ).

It belongs to the TatA/E family. As to quaternary structure, the Tat system comprises two distinct complexes: a TatABC complex, containing multiple copies of TatA, TatB and TatC subunits, and a separate TatA complex, containing only TatA subunits. Substrates initially bind to the TatABC complex, which probably triggers association of the separate TatA complex to form the active translocon.

The protein resides in the cell inner membrane. Part of the twin-arginine translocation (Tat) system that transports large folded proteins containing a characteristic twin-arginine motif in their signal peptide across membranes. TatA could form the protein-conducting channel of the Tat system. In Zymomonas mobilis subsp. mobilis (strain ATCC 31821 / ZM4 / CP4), this protein is Sec-independent protein translocase protein TatA.